Here is a 473-residue protein sequence, read N- to C-terminus: Maltose fermentation regulatory protein MAL13 (473 aa).

A DNA-binding region (zn(2)-C6 fungal-type) is located at residues 13–39; the sequence is CDCCRIRRVKCDGKRPCSSCLQNSLDC. A Nuclear localization signal motif is present at residues 46–54; it reads RKRGPKSIR.

It belongs to the MAL13 family.

It is found in the nucleus. Functionally, regulates the coordinate transcription of structural MAL1S (maltase) and AGT1 (maltose permease) genes. This is Maltose fermentation regulatory protein MAL13 (MAL13) from Saccharomyces cerevisiae (strain ATCC 204508 / S288c) (Baker's yeast).